Reading from the N-terminus, the 221-residue chain is Epididymal secretory glutathione peroxidase (221 aa).

The signal sequence occupies residues 1–21 (MAIQLRVFYLVPLLLASYVQT). The active site involves Cys73.

This sequence belongs to the glutathione peroxidase family. In terms of tissue distribution, epididymis.

It is found in the secreted. The catalysed reaction is 2 glutathione + H2O2 = glutathione disulfide + 2 H2O. In terms of biological role, protects cells and enzymes from oxidative damage, by catalyzing the reduction of hydrogen peroxide, lipid peroxides and organic hydroperoxide, by glutathione. May constitute a glutathione peroxidase-like protective system against peroxide damage in sperm membrane lipids. The polypeptide is Epididymal secretory glutathione peroxidase (Gpx5) (Rattus norvegicus (Rat)).